Reading from the N-terminus, the 171-residue chain is NRR repressor homolog 2 (171 aa).

Over residues 1–12 (MEARLSTGEKTK) the composition is skewed to basic and acidic residues. Disordered regions lie at residues 1 to 45 (MEAR…QQQM), 65 to 94 (AALPSCREDDVSGGGGGEQRQKRPRAAPWR), and 119 to 143 (TTKGQDGNCKKGKRSEANAAAEEDK). Residues 26–43 (PEEETAAETTTSEEEEQQ) show a composition bias toward acidic residues.

Belongs to the NPR1-interactor family. Interacts with NPR1/NH1. Interacts with NPR3/NH3.

The protein resides in the nucleus. Functionally, binds to and weakly represses NPR1/NH1-mediated transcriptional activation of LG2 in vitro. This Oryza sativa subsp. japonica (Rice) protein is NRR repressor homolog 2.